Reading from the N-terminus, the 126-residue chain is Lymphocyte antigen 6E (126 aa).

A signal peptide spans 1-20 (MKAFLFAVLAAVLCVERAHT). The UPAR/Ly6 domain maps to 21-98 (LICFSCSDAS…CCDSFLCNIS (78 aa)). Cystine bridges form between Cys-23–Cys-48, Cys-26–Cys-35, Cys-41–Cys-69, Cys-73–Cys-89, and Cys-90–Cys-95. Asn-96 is a glycosylation site (N-linked (GlcNAc...) asparagine). Ser-98 is lipidated: GPI-anchor amidated serine. A propeptide spans 99 to 126 (GSSSVKASYAVLALGILVSFVYVLRARE) (removed in mature form).

Expressed by thymic blast cells.

It localises to the cell membrane. The protein is Lymphocyte antigen 6E (LY6E) of Gallus gallus (Chicken).